The primary structure comprises 220 residues: Translation initiation factor IF-3 (220 aa).

The tract at residues 182 to 220 is disordered; that stretch reads TPLVKKDDKEEPATRAVRTITAPPRPTSARLASKPAGNG. The span at 185 to 194 shows a compositional bias: basic and acidic residues; that stretch reads VKKDDKEEPA.

The protein belongs to the IF-3 family. Monomer.

It is found in the cytoplasm. Functionally, IF-3 binds to the 30S ribosomal subunit and shifts the equilibrium between 70S ribosomes and their 50S and 30S subunits in favor of the free subunits, thus enhancing the availability of 30S subunits on which protein synthesis initiation begins. The protein is Translation initiation factor IF-3 of Synechococcus sp. (strain WH7803).